A 318-amino-acid chain; its full sequence is Putative 2-hydroxyacid dehydrogenase SH0752 (318 aa).

Residues 155–156 (EI), 234–236 (AGR), and aspartate 260 each bind NAD(+). Arginine 236 is a catalytic residue. Residue glutamate 265 is part of the active site. The active-site Proton donor is histidine 283. Residue 283–286 (HIGN) coordinates NAD(+).

The protein belongs to the D-isomer specific 2-hydroxyacid dehydrogenase family.

The chain is Putative 2-hydroxyacid dehydrogenase SH0752 from Staphylococcus haemolyticus (strain JCSC1435).